Consider the following 313-residue polypeptide: Ornithine carbamoyltransferase (313 aa).

Carbamoyl phosphate-binding positions include 61–64 (STRT), Gln88, Arg112, and 139–142 (HPCQ). L-ornithine contacts are provided by residues Asn170, Asp228, and 232–233 (SM). Carbamoyl phosphate-binding positions include 268–269 (CL) and Arg296.

The protein belongs to the aspartate/ornithine carbamoyltransferase superfamily. OTCase family.

It localises to the cytoplasm. It catalyses the reaction carbamoyl phosphate + L-ornithine = L-citrulline + phosphate + H(+). Its pathway is amino-acid biosynthesis; L-arginine biosynthesis; L-arginine from L-ornithine and carbamoyl phosphate: step 1/3. Reversibly catalyzes the transfer of the carbamoyl group from carbamoyl phosphate (CP) to the N(epsilon) atom of ornithine (ORN) to produce L-citrulline. The polypeptide is Ornithine carbamoyltransferase (Bordetella parapertussis (strain 12822 / ATCC BAA-587 / NCTC 13253)).